Consider the following 66-residue polypeptide: MRLTYLLLLLVAVLFQAGSGSAEPIFFYGRQPCSYYDGVCRDKSDVNCKYIAFTYCENPNQRCCYY.

Positions 1-22 (MRLTYLLLLLVAVLFQAGSGSA) are cleaved as a signal peptide. A propeptide spanning residues 23 to 24 (EP) is cleaved from the precursor. Intrachain disulfides connect Cys-33–Cys-63, Cys-40–Cys-56, and Cys-48–Cys-64.

In terms of tissue distribution, produced by the crural gland and detected in venom from the spur located on each male hind leg. Is the only OvDLP that is expressed in venom gland alone.

Its subcellular location is the secreted. Functionally, does not show antimicrobial, myotoxic, hemolytic and cell-promoting activities. This is Ornithorhynchus venom defensin-like peptide A from Ornithorhynchus anatinus (Duckbill platypus).